The chain runs to 788 residues: Cadherin-related family member 4 (788 aa).

Residues 1–16 (MVLLRLLVFLFAPVVS) form the signal peptide. Residues 17-686 (DLCSLPCFIN…DTEAFWQPQP (670 aa)) lie on the Extracellular side of the membrane. 4 consecutive Cadherin domains span residues 237 to 338 (LEQA…PPRC), 339 to 449 (LPAL…APRT), 444 to 554 (ACAP…EPPF), and 551 to 674 (EPPF…TPML). Asparagine 242 is a glycosylation site (N-linked (GlcNAc...) asparagine). The helical transmembrane segment at 687–707 (WFVVVLTATGALLLLALGWLL) threads the bilayer. Residues 708 to 788 (GRLLQGLAQL…NTHTGARRWL (81 aa)) are Cytoplasmic-facing.

The protein localises to the membrane. Functionally, cadherins are calcium-dependent cell adhesion proteins. They preferentially interact with themselves in a homophilic manner in connecting cells; cadherins may thus contribute to the sorting of heterogeneous cell types. The polypeptide is Cadherin-related family member 4 (CDHR4) (Homo sapiens (Human)).